The primary structure comprises 194 residues: Protein GrpE 2 (194 aa).

Residues 1–17 (MNDIDKHKKETQTESKN) are compositionally biased toward basic and acidic residues. Residues 1–29 (MNDIDKHKKETQTESKNDLNNTTITQNNV) are disordered. A compositionally biased stretch (polar residues) spans 18-29 (DLNNTTITQNNV).

It belongs to the GrpE family. Homodimer.

It is found in the cytoplasm. In terms of biological role, participates actively in the response to hyperosmotic and heat shock by preventing the aggregation of stress-denatured proteins, in association with DnaK and GrpE. It is the nucleotide exchange factor for DnaK and may function as a thermosensor. Unfolded proteins bind initially to DnaJ; upon interaction with the DnaJ-bound protein, DnaK hydrolyzes its bound ATP, resulting in the formation of a stable complex. GrpE releases ADP from DnaK; ATP binding to DnaK triggers the release of the substrate protein, thus completing the reaction cycle. Several rounds of ATP-dependent interactions between DnaJ, DnaK and GrpE are required for fully efficient folding. This is Protein GrpE 2 from Buchnera aphidicola subsp. Baizongia pistaciae (strain Bp).